The primary structure comprises 549 residues: Urocanate hydratase (549 aa).

NAD(+) is bound by residues 46–47, Gln124, 170–172, Glu190, Arg195, 236–237, 257–261, 267–268, and Tyr316; these read GG, GMG, NA, QTSAH, and YV. Cys404 is an active-site residue. Gly486 lines the NAD(+) pocket.

Belongs to the urocanase family. Requires NAD(+) as cofactor.

Its subcellular location is the cytoplasm. The enzyme catalyses 4-imidazolone-5-propanoate = trans-urocanate + H2O. Its pathway is amino-acid degradation; L-histidine degradation into L-glutamate; N-formimidoyl-L-glutamate from L-histidine: step 2/3. Catalyzes the conversion of urocanate to 4-imidazolone-5-propionate. This chain is Urocanate hydratase, found in Natranaerobius thermophilus (strain ATCC BAA-1301 / DSM 18059 / JW/NM-WN-LF).